We begin with the raw amino-acid sequence, 129 residues long: MKLFPGLLFCSLVLGVSGQWYSFVSEAAQGAWDMWRAYSDMREANYKNSDKYFHARGNYDAAQRGPGGAWAAKVISDARENSQRITDLLRFGDSGHGAEDSKADQAANEWGRSGKDPNHFRPAGLPDKY.

The signal sequence occupies residues 1-18 (MKLFPGLLFCSLVLGVSG). Q19 carries the pyrrolidone carboxylic acid modification. A disordered region spans residues 92 to 129 (GDSGHGAEDSKADQAANEWGRSGKDPNHFRPAGLPDKY). Residues 112–129 (RSGKDPNHFRPAGLPDKY) constitute a propeptide, often cleaved during amyloidogenesis.

The protein belongs to the SAA family. This protein is the precursor of amyloid protein A, which is formed by the removal of residues from the C-terminal end. Expressed by the liver; secreted in plasma.

The protein resides in the secreted. Major acute phase reactant. Apolipoprotein of the HDL complex. The polypeptide is Serum amyloid A protein (SAA1) (Canis lupus familiaris (Dog)).